The sequence spans 414 residues: Probable indole-3-pyruvate monooxygenase YUCCA1 (414 aa).

25-30 (GAGPSG) lines the FAD pocket. NADP(+) is bound at residue 189 to 194 (GCGNSG).

It belongs to the FMO family. Requires FAD as cofactor. As to expression, expressed in the apical meristems and young floral primordia. Detected in the floral meristems and at the base of the floral organs.

The catalysed reaction is indole-3-pyruvate + NADPH + O2 + H(+) = (indol-3-yl)acetate + CO2 + NADP(+) + H2O. It participates in plant hormone metabolism; auxin biosynthesis. Its function is as follows. Involved in auxin biosynthesis, but not in the tryptamine or the CYP79B2/B3 branches. Catalyzes in vitro the N-oxidation of tryptamine to form N-hydroxyl tryptamine. Involved during embryogenesis and seedling development. Required for the formation of floral organs and vascular tissues. Belongs to the set of redundant YUCCA genes probably responsible for auxin biosynthesis in shoots. This chain is Probable indole-3-pyruvate monooxygenase YUCCA1 (YUC1), found in Arabidopsis thaliana (Mouse-ear cress).